A 149-amino-acid polypeptide reads, in one-letter code: MTKKNFKPQGQRTVMGFDFGTKSIGIAIGQELTGSASSLKAVKAQDGIPNWDDIAVQVNEWQPDLMVVGLPLNMDGTAQEVTFKAKKFANRLHNHYAIPVETQDERLTTADAKARLFEQGGYKNLGKGKVDNMSAVIILESFFETSYGE.

Belongs to the YqgF nuclease family.

The protein localises to the cytoplasm. In terms of biological role, could be a nuclease involved in processing of the 5'-end of pre-16S rRNA. The polypeptide is Putative pre-16S rRNA nuclease (Pseudoalteromonas translucida (strain TAC 125)).